Here is a 208-residue protein sequence, read N- to C-terminus: Uracil phosphoribosyltransferase (208 aa).

5-phospho-alpha-D-ribose 1-diphosphate is bound by residues Arg-78, Arg-103, and 130–138 (DPMLATGGT). Uracil-binding positions include Ile-193 and 198-200 (GDA). Position 199 (Asp-199) interacts with 5-phospho-alpha-D-ribose 1-diphosphate.

The protein belongs to the UPRTase family. Mg(2+) serves as cofactor.

It catalyses the reaction UMP + diphosphate = 5-phospho-alpha-D-ribose 1-diphosphate + uracil. It participates in pyrimidine metabolism; UMP biosynthesis via salvage pathway; UMP from uracil: step 1/1. Its activity is regulated as follows. Allosterically activated by GTP. Catalyzes the conversion of uracil and 5-phospho-alpha-D-ribose 1-diphosphate (PRPP) to UMP and diphosphate. In Blochmanniella floridana, this protein is Uracil phosphoribosyltransferase.